Reading from the N-terminus, the 318-residue chain is MFMINVLLLIIPILLAVAFLTLVERKILGYMQLRKGPNIVGPYGLLQPIADALKLFIKEPLQPLTSSTSMFIIAPILALTLALTMWIPLPMPYPLINMNLGILFMLAMSSLAVYSILWSGWASNSKYALIGALRAVAQTISYEVTLAIILLSVLLMSGSFTLSTLIITQEYLWLIFPSWPLAMMWFISTLAETNRAPFDLTEGESELVSGFNVEYAAGPFALFFLAEYANIIMMNIFTTTLFLGAFHSPYLPELYSINFTMKTLLLTCSFLWIRASYPRFRYDQLMHLLWKNFLPLTLALCMWHVSLPIMLSSIPPQT.

A run of 8 helical transmembrane segments spans residues 2 to 22, 70 to 90, 100 to 120, 147 to 167, 171 to 191, 217 to 237, 254 to 276, and 294 to 314; these read FMINVLLLIIPILLAVAFLTL, MFIIAPILALTLALTMWIPLP, LGILFMLAMSSLAVYSILWSG, AIILLSVLLMSGSFTLSTLII, YLWLIFPSWPLAMMWFISTLA, AGPFALFFLAEYANIIMMNIF, LYSINFTMKTLLLTCSFLWIRAS, and LPLTLALCMWHVSLPIMLSSI.

It belongs to the complex I subunit 1 family. Core subunit of respiratory chain NADH dehydrogenase (Complex I) which is composed of 45 different subunits.

Its subcellular location is the mitochondrion inner membrane. It catalyses the reaction a ubiquinone + NADH + 5 H(+)(in) = a ubiquinol + NAD(+) + 4 H(+)(out). Its function is as follows. Core subunit of the mitochondrial membrane respiratory chain NADH dehydrogenase (Complex I) which catalyzes electron transfer from NADH through the respiratory chain, using ubiquinone as an electron acceptor. Essential for the catalytic activity and assembly of complex I. The protein is NADH-ubiquinone oxidoreductase chain 1 (MT-ND1) of Equus asinus (Donkey).